An 859-amino-acid polypeptide reads, in one-letter code: ATP-dependent DNA helicase PIF1 (859 aa).

A mitochondrion-targeting transit peptide spans 1–45 (MPKWIRSTLNHIIPRRPFICSFNSFLLLKNVSHAKLSFSMSSRGF). Residues serine 70 and serine 72 each carry the phosphoserine modification. Positions 142-157 (NSFDQSSQKKSRSTGF) are enriched in polar residues. The interval 142-183 (NSFDQSSQKKSRSTGFKNPLRPALKKESSFDELQNSSISQER) is disordered. Serine 169 bears the Phosphoserine mark. Positions 172 to 182 (DELQNSSISQE) are enriched in polar residues. 258–265 (GSAGTGKS) provides a ligand contact to ATP. Serine 584 carries the post-translational modification Phosphoserine. Residues 727–746 (QAYVALSRAVSREGLQVLNF) mediate DNA binding. Positions 782–859 (KRKLDYAPGP…GQDTEDHILE (78 aa)) are disordered. A compositionally biased stretch (low complexity) spans 800 to 809 (KSNSPAPISA). The span at 844 to 859 (VSDEPRGQDTEDHILE) shows a compositional bias: basic and acidic residues.

The protein belongs to the helicase family. PIF1 subfamily. As to quaternary structure, monomer in solution. DNA binding induces dimerization. Associates with mitochondrial and telomeric DNA. Binding to mtDNA is non-specific and the protein seems to coat the entire mtDNA molecule. Binds to the telomerase RNA TLC1. Interacts with the mitochondrial single-strand DNA-binding protein RIM1. The cofactor is Mg(2+). Requires Mn(2+) as cofactor. Phosphorylated. Undergoes RAD53-dependent phosphorylation in response to loss of mtDNA.

It is found in the nucleus. Its subcellular location is the nucleolus. It localises to the mitochondrion inner membrane. It catalyses the reaction Couples ATP hydrolysis with the unwinding of duplex DNA at the replication fork by translocating in the 5'-3' direction. This creates two antiparallel DNA single strands (ssDNA). The leading ssDNA polymer is the template for DNA polymerase III holoenzyme which synthesizes a continuous strand.. The catalysed reaction is ATP + H2O = ADP + phosphate + H(+). In terms of biological role, DNA-dependent ATPase and 5'-3' DNA helicase required for the maintenance of both mitochondrial and nuclear genome stability. Efficiently unwinds G-quadruplex (G4) DNA structures and forked RNA-DNA hybrids. Appears to move along DNA in single nucleotide or base pair steps, powered by hydrolysis of 1 molecule of ATP. Processes at an unwinding rate of about 75 bp/s. Resolves G4 structures, preventing replication pausing and double-strand breaks (DSBs) at G4 motifs. Involved in the maintenance of telomeric DNA. Inhibits telomere elongation, de novo telomere formation and telomere addition to DSBs via catalytic inhibition of telomerase. Reduces the processivity of telomerase by displacing active telomerase from DNA ends. Releases telomerase by unwinding the short telomerase RNA/telomeric DNA hybrid that is the intermediate in the telomerase reaction. Involved in the maintenance of ribosomal (rDNA). Required for efficient fork arrest at the replication fork barrier within rDNA. Involved in the maintenance of mitochondrial (mtDNA). Required to maintain mtDNA under conditions that introduce dsDNA breaks in mtDNA, either preventing or repairing dsDNA breaks. May inhibit replication progression to allow time for repair. May have a general role in chromosomal replication by affecting Okazaki fragment maturation. May have a role in conjunction with DNA2 helicase/nuclease in 5'-flap extension during Okazaki fragment processing. This chain is ATP-dependent DNA helicase PIF1, found in Saccharomyces cerevisiae (strain YJM789) (Baker's yeast).